Consider the following 401-residue polypeptide: Dual-specificity RNA methyltransferase RlmN (401 aa).

Glu114 (proton acceptor) is an active-site residue. The 246-residue stretch at 120–365 folds into the Radical SAM core domain; it reads DKTRGTLCVS…TMVRRTRGDD (246 aa). Cys127 and Cys370 are oxidised to a cystine. The [4Fe-4S] cluster site is built by Cys134, Cys138, and Cys141. S-adenosyl-L-methionine contacts are provided by residues 187–188, Ser219, 241–243, and Asn327; these read GE and SLH. The active-site S-methylcysteine intermediate is the Cys370.

It belongs to the radical SAM superfamily. RlmN family. The cofactor is [4Fe-4S] cluster.

It localises to the cytoplasm. It catalyses the reaction adenosine(2503) in 23S rRNA + 2 reduced [2Fe-2S]-[ferredoxin] + 2 S-adenosyl-L-methionine = 2-methyladenosine(2503) in 23S rRNA + 5'-deoxyadenosine + L-methionine + 2 oxidized [2Fe-2S]-[ferredoxin] + S-adenosyl-L-homocysteine. The enzyme catalyses adenosine(37) in tRNA + 2 reduced [2Fe-2S]-[ferredoxin] + 2 S-adenosyl-L-methionine = 2-methyladenosine(37) in tRNA + 5'-deoxyadenosine + L-methionine + 2 oxidized [2Fe-2S]-[ferredoxin] + S-adenosyl-L-homocysteine. In terms of biological role, specifically methylates position 2 of adenine 2503 in 23S rRNA and position 2 of adenine 37 in tRNAs. m2A2503 modification seems to play a crucial role in the proofreading step occurring at the peptidyl transferase center and thus would serve to optimize ribosomal fidelity. The protein is Dual-specificity RNA methyltransferase RlmN of Stenotrophomonas maltophilia (strain K279a).